Consider the following 195-residue polypeptide: uncharacterized protein (195 aa).

One can recognise an HTH tetR-type domain in the interval 6 to 66 (VESRKRLLKA…ELITDFHSRV (61 aa)). Residues 29-48 (KVSEIVKKAGFTQPSFYLYF) constitute a DNA-binding region (H-T-H motif).

This is an uncharacterized protein from Bacillus subtilis (strain 168).